The chain runs to 236 residues: Rho-related GTP-binding protein RhoV (236 aa).

The tract at residues 1–27 is disordered; it reads MPPRELSEAEPPPLPASTPPPRRRSAP. Positions 10 to 20 are enriched in pro residues; the sequence is EPPPLPASTPP. Ser25 bears the Phosphoserine mark. GTP-binding positions include 38 to 45, 85 to 89, and 143 to 146; these read GDGAVGKS, DTAGQ, and TQAD. Cys234 is lipidated: S-palmitoyl cysteine.

This sequence belongs to the small GTPase superfamily. Rho family. In terms of assembly, interacts with PAK2. Mg(2+) is required as a cofactor.

The protein localises to the cell membrane. Its subcellular location is the endosome membrane. Its function is as follows. Plays a role in the control of the actin cytoskeleton via activation of the JNK pathway. This is Rho-related GTP-binding protein RhoV from Mus musculus (Mouse).